The chain runs to 576 residues: Vacuolar protein sorting-associated protein vps5 (576 aa).

Disordered regions lie at residues 1-60 (MLGH…PRKR) and 156-198 (DAAS…APQS). Phosphothreonine is present on Thr55. The segment covering 156 to 169 (DAASSSAPNFTHTV) has biased composition (polar residues). Positions 170–181 (SSASSQKQGSTS) are enriched in low complexity. The PX domain occupies 200-317 (TPFYIQVHDP…KLFLEAETFD (118 aa)). A 1,2-diacyl-sn-glycero-3-phospho-(1D-myo-inositol-3-phosphate) contacts are provided by Arg244, Lys270, and Arg284. Ser332 is subject to Phosphoserine.

Belongs to the sorting nexin family. As to quaternary structure, component of the retromer complex which consists of vps29, vps26, vps35, vps5 and vps17.

Its subcellular location is the cytoplasm. It localises to the golgi apparatus. The protein resides in the membrane. Required for efficient sporulation target of PtdIns(3)P in vesicle transport required for onset of the forespore membrane formation. Its function is as follows. Plays a role in vesicular protein sorting. Required for the endosome-to-Golgi retrieval of the vacuolar protein sorting receptor pep1/vps10. Component of the membrane-associated retromer complex which is essential in endosome-to-Golgi retrograde transport. The vps29-vps26-vps35 subcomplex may be involved in cargo selection. This is Vacuolar protein sorting-associated protein vps5 (vps5) from Schizosaccharomyces pombe (strain 972 / ATCC 24843) (Fission yeast).